Reading from the N-terminus, the 250-residue chain is 2,3-bisphosphoglycerate-dependent phosphoglycerate mutase (250 aa).

Substrate-binding positions include 10–17, 23–24, Arg62, 89–92, Lys100, 116–117, and 185–186; these read RHGESQWN, TG, ERHY, RR, and GN. His11 acts as the Tele-phosphohistidine intermediate in catalysis. Glu89 serves as the catalytic Proton donor/acceptor.

Belongs to the phosphoglycerate mutase family. BPG-dependent PGAM subfamily. Homodimer.

The enzyme catalyses (2R)-2-phosphoglycerate = (2R)-3-phosphoglycerate. It functions in the pathway carbohydrate degradation; glycolysis; pyruvate from D-glyceraldehyde 3-phosphate: step 3/5. In terms of biological role, catalyzes the interconversion of 2-phosphoglycerate and 3-phosphoglycerate. This is 2,3-bisphosphoglycerate-dependent phosphoglycerate mutase from Erwinia tasmaniensis (strain DSM 17950 / CFBP 7177 / CIP 109463 / NCPPB 4357 / Et1/99).